Here is a 282-residue protein sequence, read N- to C-terminus: Bifunctional protein FolD (282 aa).

NADP(+)-binding positions include 165–167 (GAS) and Ile231.

It belongs to the tetrahydrofolate dehydrogenase/cyclohydrolase family. In terms of assembly, homodimer.

The catalysed reaction is (6R)-5,10-methylene-5,6,7,8-tetrahydrofolate + NADP(+) = (6R)-5,10-methenyltetrahydrofolate + NADPH. It carries out the reaction (6R)-5,10-methenyltetrahydrofolate + H2O = (6R)-10-formyltetrahydrofolate + H(+). It functions in the pathway one-carbon metabolism; tetrahydrofolate interconversion. In terms of biological role, catalyzes the oxidation of 5,10-methylenetetrahydrofolate to 5,10-methenyltetrahydrofolate and then the hydrolysis of 5,10-methenyltetrahydrofolate to 10-formyltetrahydrofolate. This chain is Bifunctional protein FolD, found in Francisella philomiragia subsp. philomiragia (strain ATCC 25017 / CCUG 19701 / FSC 153 / O#319-036).